The sequence spans 197 residues: Phosphoheptose isomerase (197 aa).

One can recognise an SIS domain in the interval Met34 to Gln196. Asn49 to Gly51 serves as a coordination point for substrate. His58 and Glu62 together coordinate Zn(2+). Residues Glu62, Asn91–Asp92, Ser117–Ser119, Ser122, and Gln172 contribute to the substrate site. Positions 172 and 180 each coordinate Zn(2+).

It belongs to the SIS family. GmhA subfamily. Homotetramer. Zn(2+) is required as a cofactor.

Its subcellular location is the cytoplasm. The catalysed reaction is 2 D-sedoheptulose 7-phosphate = D-glycero-alpha-D-manno-heptose 7-phosphate + D-glycero-beta-D-manno-heptose 7-phosphate. The protein operates within carbohydrate biosynthesis; D-glycero-D-manno-heptose 7-phosphate biosynthesis; D-glycero-alpha-D-manno-heptose 7-phosphate and D-glycero-beta-D-manno-heptose 7-phosphate from sedoheptulose 7-phosphate: step 1/1. Catalyzes the isomerization of sedoheptulose 7-phosphate in D-glycero-D-manno-heptose 7-phosphate. This is Phosphoheptose isomerase from Shewanella halifaxensis (strain HAW-EB4).